The primary structure comprises 160 residues: Phosphopantetheine adenylyltransferase (160 aa).

Threonine 9 contacts substrate. Residues 9 to 10 (TF) and histidine 17 contribute to the ATP site. Substrate is bound by residues lysine 41, leucine 73, and arginine 87. ATP contacts are provided by residues 88–90 (GLR), glutamate 98, and 123–129 (YSFISST).

It belongs to the bacterial CoaD family. Homohexamer. Mg(2+) serves as cofactor.

It is found in the cytoplasm. The catalysed reaction is (R)-4'-phosphopantetheine + ATP + H(+) = 3'-dephospho-CoA + diphosphate. It participates in cofactor biosynthesis; coenzyme A biosynthesis; CoA from (R)-pantothenate: step 4/5. Functionally, reversibly transfers an adenylyl group from ATP to 4'-phosphopantetheine, yielding dephospho-CoA (dPCoA) and pyrophosphate. This Ectopseudomonas mendocina (strain ymp) (Pseudomonas mendocina) protein is Phosphopantetheine adenylyltransferase.